The following is a 394-amino-acid chain: NADH-quinone oxidoreductase subunit D 2 (394 aa).

It belongs to the complex I 49 kDa subunit family. As to quaternary structure, NDH-1 is composed of 14 different subunits. Subunits NuoB, C, D, E, F, and G constitute the peripheral sector of the complex.

It is found in the cell membrane. The catalysed reaction is a quinone + NADH + 5 H(+)(in) = a quinol + NAD(+) + 4 H(+)(out). NDH-1 shuttles electrons from NADH, via FMN and iron-sulfur (Fe-S) centers, to quinones in the respiratory chain. The immediate electron acceptor for the enzyme in this species is believed to be a menaquinone. Couples the redox reaction to proton translocation (for every two electrons transferred, four hydrogen ions are translocated across the cytoplasmic membrane), and thus conserves the redox energy in a proton gradient. The protein is NADH-quinone oxidoreductase subunit D 2 of Streptomyces griseus subsp. griseus (strain JCM 4626 / CBS 651.72 / NBRC 13350 / KCC S-0626 / ISP 5235).